The following is a 1419-amino-acid chain: MEGTHCTLQLHKPITELCYISFCLPKGEVRGFSYKGTVTLDRSNKGFHNCYQVREESDIISLSQEPDEHPGDIFFKQTPTKDILTELYKLTTERERLLTNLLSSDHILGITMGNQEGKLQELSVSLAPEDDCFQSAGDWQGELPVGPLNKRSTHGNKKPRRSSGRRESFGALPQKRTKRKGRGGRESAPLMGKDKICSSHSLPLSRTRPNLWVLEEKGNLLPNGALACSLQRRESCPPDIPKTPDTDLGFGSFETAFKDTGLGREVLPPDCSSTEAGGDGIRRPPSGLEHQQTGLSESHQDPEKHPEAEKDEMEKPAKRTCKQKPVSKVVAKVQDLSSQVQRVVKTHSKGKETIAIRPAAHAEFVPKADLLTLPGAEAGAHGSRRQGKERQGDRSSQSPAGETASISSVSASAEGAVNKVPLKVIESEKLDEAPEGKRLGFPVHTSVPHTRPETRNKRRAGLPLGGHKSLFLDLPHKVGPDSSQPRGDKKKPSPPAPAALGKVFNNSASQSSTHKQTSPVPSPLSPRLPSPQQHHRILRLPALPGEREAALNDSPCRKSRVFSGCVSADTLEPPSSAKVTETKGASPAFLRAGQPRLVPGETLEKSLGPGKTTAEPQHQSPPGISSEGFPWDGFNEQTPKDLPNRDGGAWVLGYRAGPACPFLLHEEREKSNRSELYLDLHPDHSLTEQDDRTPGRLQAVWPPPKTKDTEEKVGLKYTEAEYQAAILHLKREHKEEIENLQAQFELRAFHIRGEHAMITARLEETIENLKHELEHRWRGGCEERKDVCISTDDDCPPKTFRNVCVQTDRETFLKPCESESKTTRSNQLVPKKLNISSLSQLSPPNDHKDIHAALQPMEGMASNQQKALPPPPASIPPPPPLPSGLGSLSPAPPMPPVSAGPPLPPPPPPPPPLPPPSSAGPPPPPPPPPLPNSPAPPNPGGPPPAPPPPGLAPPPPPGLFFGLGSSSSQCPRKPAIEPSCPMKPLYWTRIQISDRSQNATPTLWDSLEEPDIRDPSEFEYLFSKDTTQQKKKPLSETYEKKNKVKKIIKLLDGKRSQTVGILISSLHLEMKDIQQAIFNVDDSVVDLETLAALYENRAQEDELVKIRKYYETSKEEELKLLDKPEQFLHELAQIPNFAERAQCIIFRSVFSEGITSLHRKVEIITRASKDLLHVKSVKDILALILAFGNYMNGGNRTRGQADGYSLEILPKLKDVKSRDNGINLVDYVVKYYLRYYDQEAGTEKSVFPLPEPQDFFLASQVKFEDLIKDLRKLKRQLEASEKQMVVVCKESPKEYLQPFKDKLEEFFQKAKKEHKMEESHLENAQKSFETTVRYFGMKPKSGEKEITPSYVFMVWYEFCSDFKTIWKRESKNISKERLKMAQESVSKLTSEKKVETKKINPTASLKERLRQKEASVTTN.

The tract at residues 1–622 (MEGTHCTLQL…TAEPQHQSPP (622 aa)) is microtubule-binding. Disordered regions lie at residues 138–194 (DWQG…MGKD), 262–331 (LGRE…KVVA), 343–641 (VVKT…TPKD), and 685–711 (SLTE…DTEE). A compositionally biased stretch (basic residues) spans 151-163 (RSTHGNKKPRRSS). Positions 298-317 (SHQDPEKHPEAEKDEMEKPA) are enriched in basic and acidic residues. A compositionally biased stretch (polar residues) spans 394–411 (RSSQSPAGETASISSVSA). Residues 425–438 (IESEKLDEAPEGKR) show a composition bias toward basic and acidic residues. Residues 456-842 (NKRRAGLPLG…LNISSLSQLS (387 aa)) are mediates interaction with alpha-catenin. A compositionally biased stretch (polar residues) spans 504–517 (FNNSASQSSTHKQT). Residues 520–529 (VPSPLSPRLP) show a composition bias toward pro residues. Over residues 614 to 623 (AEPQHQSPPG) the composition is skewed to polar residues. Residues 685–694 (SLTEQDDRTP) are compositionally biased toward basic and acidic residues. Residues 720-774 (AEYQAAILHLKREHKEEIENLQAQFELRAFHIRGEHAMITARLEETIENLKHELE) are a coiled coil. Disordered regions lie at residues 859-978 (GMAS…AIEP) and 1390-1419 (SEKK…VTTN). Composition is skewed to pro residues over residues 868-882 (LPPP…PPLP) and 890-958 (PAPP…PPPG). One can recognise an FH1 domain in the interval 870 to 957 (PPPASIPPPP…PPGLAPPPPP (88 aa)). The 417-residue stretch at 972–1388 (RKPAIEPSCP…KMAQESVSKL (417 aa)) folds into the FH2 domain.

This sequence belongs to the formin homology family. Cappuccino subfamily. In terms of assembly, interacts with alpha-catenin and may interact with tubulin. In terms of processing, phosphorylated on serine and possibly threonine residues.

Its subcellular location is the nucleus. It localises to the cytoplasm. It is found in the cell junction. The protein localises to the adherens junction. The protein resides in the cell membrane. In terms of biological role, plays a role in the formation of adherens junction and the polymerization of linear actin cables. The chain is Formin-1 (FMN1) from Homo sapiens (Human).